The primary structure comprises 311 residues: Phosphoribosylaminoimidazole-succinocarboxamide synthase (311 aa).

Belongs to the SAICAR synthetase family.

It catalyses the reaction 5-amino-1-(5-phospho-D-ribosyl)imidazole-4-carboxylate + L-aspartate + ATP = (2S)-2-[5-amino-1-(5-phospho-beta-D-ribosyl)imidazole-4-carboxamido]succinate + ADP + phosphate + 2 H(+). Its pathway is purine metabolism; IMP biosynthesis via de novo pathway; 5-amino-1-(5-phospho-D-ribosyl)imidazole-4-carboxamide from 5-amino-1-(5-phospho-D-ribosyl)imidazole-4-carboxylate: step 1/2. This is Phosphoribosylaminoimidazole-succinocarboxamide synthase from Azoarcus sp. (strain BH72).